A 287-amino-acid polypeptide reads, in one-letter code: 4-hydroxybenzoate octaprenyltransferase (287 aa).

The next 9 helical transmembrane spans lie at 7 to 27, 30 to 50, 94 to 114, 118 to 138, 142 to 162, 167 to 187, 209 to 229, 235 to 255, and 266 to 286; these read FISYGYLIRLDKPIGTLLLLW, LWALWLASSGVLDLSILLIFV, VAVASFLALCAFLLIQPLNAF, LSVLALLVAFIYPFTKRFFAM, VLGIAFGFGIPMAYAAILDFI, WFLFTGNIFWAIAYDTAYAMV, VVVIAISYGMLFLSHLWVAQL, YFLVGWFAALACAIYHLKLVS, and FRHNNWLGGFLFLGIVLGLGV.

Belongs to the UbiA prenyltransferase family. Mg(2+) serves as cofactor.

It is found in the cell inner membrane. The enzyme catalyses all-trans-octaprenyl diphosphate + 4-hydroxybenzoate = 4-hydroxy-3-(all-trans-octaprenyl)benzoate + diphosphate. Its pathway is cofactor biosynthesis; ubiquinone biosynthesis. Its function is as follows. Catalyzes the prenylation of para-hydroxybenzoate (PHB) with an all-trans polyprenyl group. Mediates the second step in the final reaction sequence of ubiquinone-8 (UQ-8) biosynthesis, which is the condensation of the polyisoprenoid side chain with PHB, generating the first membrane-bound Q intermediate 3-octaprenyl-4-hydroxybenzoate. This Polynucleobacter necessarius subsp. necessarius (strain STIR1) protein is 4-hydroxybenzoate octaprenyltransferase.